The sequence spans 1334 residues: Nck-associated protein 5-like (1334 aa).

Disordered regions lie at residues 1–28, 115–146, 210–234, 266–316, and 349–711; these read MSEA…MEPG, LPQI…APLP, TPWR…GPPQ, GEED…SPDT, and PLNG…MVPS. The mediates interaction with CDK5RAP2 and is required for homodimerization and microtubule bundle formation stretch occupies residues 1–139; it reads MSEAMDQPAG…PASPSLSSTE (139 aa). A coiled-coil region spans residues 28 to 106; sequence GTCQELLHRL…NQMLSALFQQ (79 aa). Residues 122 to 132 are compositionally biased toward pro residues; sequence PLQPPSEPPAS. Residues 358 to 372 are compositionally biased toward polar residues; that stretch reads GQSSSPDQAPPQLSK. 4 positions are modified to phosphoserine; by CDK1: Ser440, Ser451, Ser470, and Ser477. Positions 468–481 are enriched in low complexity; it reads SPSPGGPQLSPQLP. The (S/T)X(I/L)P motif 1 signature appears at 484 to 487; it reads SRIP. A phosphoserine mark is found at Ser493, Ser496, and Ser498. Over residues 519–547 the composition is skewed to polar residues; the sequence is LPTSPSPCYTTPDSTQLRPPQSALSTTLS. Phosphoserine; by CDK1 is present on residues Ser571 and Ser577. Residues 638 to 649 are compositionally biased toward polar residues; the sequence is PGNSSKKPSQGS. At Thr659 the chain carries Phosphothreonine. Residues 750–1146 form a mediates interaction with beta-tubulin and is required for microtubule bundle formation region; sequence RVYSSHSMGA…SGTPSKNLPK (397 aa). Phosphoserine; by CDK1 is present on Ser767. A disordered region spans residues 782–884; sequence LAGALCPQVP…EGLAPHSAIE (103 aa). Residues 810–825 are compositionally biased toward low complexity; sequence SPHSSPTKLPSKSPTK. The (S/T)X(I/L)P motif 2 signature appears at 816–819; it reads TKLP. The (S/T)X(I/L)P motif 3; required for interaction with MAPRE1 signature appears at 926 to 929; that stretch reads SKLP. Disordered stretches follow at residues 931–953, 986–1015, and 1030–1183; these read LNRR…LRRE, KAYL…QGQL, and LNRV…VPGI. Over residues 933-942 the composition is skewed to basic and acidic residues; sequence RRTEATKNKE. The stretch at 956 to 994 forms a coiled coil; that stretch reads MEARKLEAESLNISKLMAKAEDLRRALEEEKAYLSSRAR. Over residues 1033-1050 the composition is skewed to basic and acidic residues; that stretch reads VDGKELPSKSWREPKPEY. Low complexity predominate over residues 1079–1090; it reads GCGKPPGKPSSE. The segment covering 1110 to 1122 has biased composition (polar residues); it reads SHFTACGSLTRTL. A compositionally biased stretch (pro residues) spans 1152 to 1167; the sequence is LDPPPGVPPARPPPLT. A Phosphoserine modification is found at Ser1194. Residues 1197–1206 show a composition bias toward low complexity; it reads AFPALLPAAP. Residues 1197–1334 are disordered; sequence AFPALLPAAP…DSLSSCGSQG (138 aa). Residues 1235 to 1247 are compositionally biased toward polar residues; sequence TFPNTRAAGSSSD. Over residues 1313–1334 the composition is skewed to low complexity; sequence LETSESLSDSLYDSLSSCGSQG.

In terms of assembly, homodimer. Interacts with CDK5RAP2. Interacts with MAPRE1. Interacts with beta-tubulin. CDK1/Cyclin B-dependent phosphorylation mediates its dissociation from centrosomes during mitosis.

Its subcellular location is the cytoplasm. It localises to the cytoskeleton. The protein resides in the microtubule organizing center. It is found in the centrosome. In terms of biological role, regulates microtubule organization and stabilization. Promotes microtubule growth and bundling formation and stabilizes microtubules by increasing intense acetylation of microtubules. Both tubulin-binding and homodimer formation are required for NCKAP5L-mediated microtubule bundle formation. The chain is Nck-associated protein 5-like from Homo sapiens (Human).